The chain runs to 219 residues: Ion-translocating oxidoreductase complex subunit G (219 aa).

The chain crosses the membrane as a helical span at residues 25-45 (GLLLGLFSLVSALMLALASDA). Threonine 187 is subject to FMN phosphoryl threonine.

The protein belongs to the RnfG family. The complex is composed of six subunits: RnfA, RnfB, RnfC, RnfD, RnfE and RnfG. It depends on FMN as a cofactor.

It is found in the cellular chromatophore membrane. Its function is as follows. Part of a membrane-bound complex that couples electron transfer with translocation of ions across the membrane. This Cereibacter sphaeroides (strain ATCC 17023 / DSM 158 / JCM 6121 / CCUG 31486 / LMG 2827 / NBRC 12203 / NCIMB 8253 / ATH 2.4.1.) (Rhodobacter sphaeroides) protein is Ion-translocating oxidoreductase complex subunit G.